Consider the following 85-residue polypeptide: Glutaredoxin 1 (85 aa).

The region spanning 1–85 (MQTVIFGRSG…AAWVKENLDA (85 aa)) is the Glutaredoxin domain. Cys11 and Cys14 are oxidised to a cystine.

Belongs to the glutaredoxin family. As to quaternary structure, monomer.

The disulfide bond functions as an electron carrier in the glutathione-dependent synthesis of deoxyribonucleotides by the enzyme ribonucleotide reductase. In addition, it is also involved in reducing some disulfides in a coupled system with glutathione reductase. The polypeptide is Glutaredoxin 1 (grxA) (Shigella flexneri).